We begin with the raw amino-acid sequence, 170 residues long: UPF0161 protein At3g09310 (170 aa).

2 disordered regions span residues 49–70 (CLSA…GEEL) and 147–170 (SGIK…QRKI). Positions 154–170 (GDEEEEDNYDDEDQRKI) are enriched in acidic residues.

It belongs to the UPF0161 family.

This is UPF0161 protein At3g09310 from Arabidopsis thaliana (Mouse-ear cress).